Here is a 62-residue protein sequence, read N- to C-terminus: MIPVRCFSCGKVISNYWDEYKRRVTDGEDAAAVLDDLGITRYCCRRMFLSHVELIDVLSPYQ.

4 residues coordinate Zn(2+): Cys6, Cys9, Cys43, and Cys44.

This sequence belongs to the archaeal Rpo10/eukaryotic RPB10 RNA polymerase subunit family. In terms of assembly, part of the RNA polymerase complex. The cofactor is Zn(2+).

Its subcellular location is the cytoplasm. It catalyses the reaction RNA(n) + a ribonucleoside 5'-triphosphate = RNA(n+1) + diphosphate. In terms of biological role, DNA-dependent RNA polymerase (RNAP) catalyzes the transcription of DNA into RNA using the four ribonucleoside triphosphates as substrates. This chain is DNA-directed RNA polymerase subunit Rpo10, found in Methanosarcina mazei (strain ATCC BAA-159 / DSM 3647 / Goe1 / Go1 / JCM 11833 / OCM 88) (Methanosarcina frisia).